The sequence spans 164 residues: Pyruvoyl-dependent arginine decarboxylase (164 aa).

Serine 52 is subject to Pyruvic acid (Ser).

It belongs to the PdaD family. It depends on pyruvate as a cofactor.

It carries out the reaction L-arginine + H(+) = agmatine + CO2. In Methanococcus maripaludis (strain C5 / ATCC BAA-1333), this protein is Pyruvoyl-dependent arginine decarboxylase.